A 196-amino-acid polypeptide reads, in one-letter code: Late protein I196L (196 aa).

2 tandem repeats follow at residues 28-48 (SNYL…TSSN) and 49-68 (HITT…SSNH). Residues 69-87 (ITTAISNNITDKDDYTHFS) form a 3; approximate repeat.

This sequence belongs to the asfivirus I196L family.

The protein is Late protein I196L of Ornithodoros (relapsing fever ticks).